We begin with the raw amino-acid sequence, 287 residues long: Glycine--tRNA ligase alpha subunit (287 aa).

Belongs to the class-II aminoacyl-tRNA synthetase family. Tetramer of two alpha and two beta subunits.

The protein localises to the cytoplasm. It carries out the reaction tRNA(Gly) + glycine + ATP = glycyl-tRNA(Gly) + AMP + diphosphate. This chain is Glycine--tRNA ligase alpha subunit, found in Petrotoga mobilis (strain DSM 10674 / SJ95).